Consider the following 406-residue polypeptide: Tyrosine-protein phosphatase non-receptor type 2 (406 aa).

The 271-residue stretch at 5 to 275 folds into the Tyrosine-protein phosphatase domain; sequence IEREFEELDA…RFSYMAIIEG (271 aa). Tyr-22 is modified (phosphotyrosine). Ser-52 carries the post-translational modification Phosphoserine. Tyr-68 carries the post-translational modification Phosphotyrosine. Substrate is bound by residues Asp-182, 216–222, and Gln-260; that span reads CSAGIGR. Cys-216 serves as the catalytic Phosphocysteine intermediate. Cys-216 bears the S-nitrosocysteine mark. Residues Ser-293, Ser-298, Ser-304, Ser-320, and Ser-339 each carry the phosphoserine modification. Residues 341–406 are endoplasmic reticulum location; sequence ESILRKRIRE…ALVGWTLLFH (66 aa). A mediates interaction with STX17 region spans residues 371–406; that stretch reads ERKRKRWLYWQPILTKMGFVSVILVGALVGWTLLFH.

Belongs to the protein-tyrosine phosphatase family. Non-receptor class 1 subfamily. As to quaternary structure, interacts with RMDN3. Isoform 1 interacts with TMED9. Isoform 1 interacts with STX17; dephosphorylates STX17. Interacts with ITGA1 (via cytoplasmic domain); activates the phosphatase activity towards EGFR. Interacts with TRAF2; probably involved in tumor necrosis factor-mediated signaling. Interacts with MET. Interacts with FAM220A and STAT3; interaction with FAM220A promotes interaction of PTPN2 with transcriptional activator STAT3, leading to dephosphorylation of STAT3 by PTPN2 and negative regulation of STAT3 transcriptional activator activity. Post-translationally, specifically phosphorylated in a cell cycle-dependent manner by cyclin-dependent kinases CDK1 and CDK2. Probably activated through phosphorylation by PKR. Ubiquitously expressed. The highest expression levels were found in ovary, testis, thymus and kidney.

Its subcellular location is the endoplasmic reticulum. The protein resides in the endoplasmic reticulum-Golgi intermediate compartment. The protein localises to the nucleus. It is found in the cytoplasm. It localises to the cell membrane. It catalyses the reaction O-phospho-L-tyrosyl-[protein] + H2O = L-tyrosyl-[protein] + phosphate. Non-receptor type tyrosine-specific phosphatase that dephosphorylates receptor protein tyrosine kinases including INSR, EGFR, CSF1R, PDGFR. Also dephosphorylates non-receptor protein tyrosine kinases like JAK1, JAK2, JAK3, Src family kinases, STAT1, STAT3 and STAT6 either in the nucleus or the cytoplasm. Negatively regulates numerous signaling pathways and biological processes like hematopoiesis, inflammatory response, cell proliferation and differentiation, and glucose homeostasis. Plays a multifaceted and important role in the development of the immune system. Functions in T-cell receptor signaling through dephosphorylation of FYN and LCK to control T-cells differentiation and activation. Dephosphorylates CSF1R, negatively regulating its downstream signaling and macrophage differentiation. Negatively regulates cytokine (IL2/interleukin-2 and interferon)-mediated signaling through dephosphorylation of the cytoplasmic kinases JAK1, JAK3 and their substrate STAT1, that propagate signaling downstream of the cytokine receptors. Also regulates the IL6/interleukin-6 and IL4/interleukin-4 cytokine signaling through dephosphorylation of STAT3 and STAT6 respectively. In addition to the immune system, it is involved in anchorage-dependent, negative regulation of EGF-stimulated cell growth. Activated by the integrin ITGA1/ITGB1, it dephosphorylates EGFR and negatively regulates EGF signaling. Dephosphorylates PDGFRB and negatively regulates platelet-derived growth factor receptor-beta signaling pathway and therefore cell proliferation. Negatively regulates tumor necrosis factor-mediated signaling downstream via MAPK through SRC dephosphorylation. May also regulate the hepatocyte growth factor receptor signaling pathway through dephosphorylation of the hepatocyte growth factor receptor MET. Also plays an important role in glucose homeostasis. For instance, negatively regulates the insulin receptor signaling pathway through the dephosphorylation of INSR and control gluconeogenesis and liver glucose production through negative regulation of the IL6 signaling pathways. May also bind DNA. The sequence is that of Tyrosine-protein phosphatase non-receptor type 2 (Ptpn2) from Mus musculus (Mouse).